The chain runs to 590 residues: MAVDSNLSSPLGPPACEKDAKALRFIEEMTRNADTVQENLLAEILARNADTEYLRRFNLCGATDRDTFKTKIPVITYEDLQPEIQRIADGDRSPILSAHPISEFLTSSGTSAGERKLMPTIKEELDRRQLLYSLLMPVMNLYVPGLDKGKGMYFLFVKSETKTPGGLPARPVLTSYYKSEHFRSRPYDPYNVYTSPNEAILCPDSFQSMYTQMLCGLLDRLSVLRVGAVFASGLLRAIRFLQLHWSRFAHDIELGCLDSEITDPSIRQCMSGILKPDPVLAEFIRRECKSDNWEKIITRIWPNTKYLDVIVTGAMAQYIPTLEYYSGGLPMACTMYASSECYFGLNLNPMSKPSEVSYTIMPNMAYFEFIPLGGTKAVELVDVNIGKEYELVVTTYAGLCRYRVGDILRVTGFHNSAPQFHFVRRKNVLLSIDSDKTDESELQKAVENASSILHEECGSRVAEYTSYADTSTIPGHYVLYWELLVRDGARQPSHETLTRCCLGMEESLNSVYRQSRVADNSVGPLEIRVVRNGTFEELMDYAISRGASINQYKVPRCVNFTPIVELLDSRVVSAHFSPSLPHWTPERRRR.

This sequence belongs to the IAA-amido conjugating enzyme family.

Catalyzes the synthesis of indole-3-acetic acid (IAA)-amino acid conjugates, providing a mechanism for the plant to cope with the presence of excess auxin. The protein is Probable indole-3-acetic acid-amido synthetase GH3.1 (GH3.1) of Arabidopsis thaliana (Mouse-ear cress).